The following is a 362-amino-acid chain: D-alanine--D-alanine ligase (362 aa).

Positions 134-345 (KILAQRAGVP…YPDLITRLIR (212 aa)) constitute an ATP-grasp domain. Position 170–225 (170–225 (GQLGTSNLFVKPSNQGSSVGITHVTDDSNYAEALAEAFKYDDKVLVEEGIVGTEVE)) interacts with ATP. D298, E312, and N314 together coordinate Mg(2+).

This sequence belongs to the D-alanine--D-alanine ligase family. Mg(2+) serves as cofactor. Mn(2+) is required as a cofactor.

Its subcellular location is the cytoplasm. It catalyses the reaction 2 D-alanine + ATP = D-alanyl-D-alanine + ADP + phosphate + H(+). It participates in cell wall biogenesis; peptidoglycan biosynthesis. Cell wall formation. The protein is D-alanine--D-alanine ligase of Lactobacillus delbrueckii subsp. bulgaricus (strain ATCC BAA-365 / Lb-18).